Consider the following 859-residue polypeptide: Ribose import ATP-binding protein RbsA 1 (859 aa).

The segment at methionine 1–glutamate 351 is disordered. Residues methionine 1 to alanine 353 are unknown. Basic and acidic residues predominate over residues glycine 8–valine 17. Over residues arginine 28 to arginine 43 the composition is skewed to basic residues. Basic and acidic residues-rich tracts occupy residues arginine 44–alanine 80, arginine 89–glycine 129, and arginine 137–arginine 167. Positions arginine 168–proline 179 are enriched in basic residues. Composition is skewed to basic and acidic residues over residues glycine 193–glutamate 214, arginine 239–valine 250, alanine 263–arginine 281, aspartate 288–glycine 301, and aspartate 308–valine 323. 2 ABC transporter domains span residues leucine 358–arginine 594 and arginine 607–valine 851. ATP is bound at residue glycine 390–serine 397.

This sequence belongs to the ABC transporter superfamily. Ribose importer (TC 3.A.1.2.1) family. In terms of assembly, the complex is composed of an ATP-binding protein (RbsA), two transmembrane proteins (RbsC) and a solute-binding protein (RbsB).

The protein resides in the cell inner membrane. The catalysed reaction is D-ribose(out) + ATP + H2O = D-ribose(in) + ADP + phosphate + H(+). In terms of biological role, part of the ABC transporter complex RbsABC involved in ribose import. Responsible for energy coupling to the transport system. The sequence is that of Ribose import ATP-binding protein RbsA 1 from Burkholderia pseudomallei (strain 1710b).